The following is a 159-amino-acid chain: Cyclic pyranopterin monophosphate synthase (159 aa).

Substrate is bound by residues 74 to 76 (MCH) and 112 to 113 (ME). Residue D127 is part of the active site.

This sequence belongs to the MoaC family. In terms of assembly, homohexamer; trimer of dimers.

The catalysed reaction is (8S)-3',8-cyclo-7,8-dihydroguanosine 5'-triphosphate = cyclic pyranopterin phosphate + diphosphate. It participates in cofactor biosynthesis; molybdopterin biosynthesis. Functionally, catalyzes the conversion of (8S)-3',8-cyclo-7,8-dihydroguanosine 5'-triphosphate to cyclic pyranopterin monophosphate (cPMP). The protein is Cyclic pyranopterin monophosphate synthase of Helicobacter hepaticus (strain ATCC 51449 / 3B1).